A 75-amino-acid chain; its full sequence is Peptide Ctri10036 (75 aa).

The N-terminal stretch at 1–22 (MNSKYLFVFLILNVIFIDLCQG) is a signal peptide. The residue at position 41 (Lys-41) is a Lysine amide. The propeptide occupies 47–75 (ELGSQYDYLQDFRKRELDLDDLLSKFPDY).

This sequence belongs to the non-disulfide-bridged peptide (NDBP) superfamily. Short antimicrobial peptide (group 4) family. In terms of tissue distribution, expressed by the venom gland.

It is found in the secreted. This is Peptide Ctri10036 from Chaerilus tricostatus (Scorpion).